A 1447-amino-acid polypeptide reads, in one-letter code: Netrin receptor DCC (1447 aa).

A signal peptide spans 1-25 (MENSLRCVWVPKLAFVLFGASLFSA). Ig-like C2-type domains follow at residues 26–135 (HLQV…AKVA), 139–229 (PLRF…AEVR), 234–326 (PGLH…AELT), and 331–416 (PWFL…AQLI). The Extracellular portion of the chain corresponds to 26-1097 (HLQVTGFQIK…GSVTPQKNSN (1072 aa)). 3 disulfide bridges follow: Cys61-Cys117, Cys161-Cys212, and Cys261-Cys310. N-linked (GlcNAc...) asparagine glycosylation is present at Asn94. N-linked (GlcNAc...) asparagine glycans are attached at residues Asn299 and Asn318. Cys352 and Cys400 are joined by a disulfide. Fibronectin type-III domains lie at 431-524 (APRD…TQPE), 530-620 (PVEN…TLSD), 625-718 (PPQN…TPEN), 728-821 (QPSS…TDPT), 846-942 (PPVG…TYEA), and 947-1044 (APKD…TLKV). An N-linked (GlcNAc...) asparagine glycan is attached at Asn478. N-linked (GlcNAc...) asparagine glycans are attached at residues Asn628 and Asn702. A helical transmembrane segment spans residues 1098-1122 (LLVIIVVTVGVITVLVVVIVAVICT). The Cytoplasmic portion of the chain corresponds to 1123–1447 (RRSSAQQRKK…QLNAITGSAF (325 aa)). 2 disordered regions span residues 1126–1152 (SAQQ…RPPD) and 1165–1222 (IEKP…TLER). Residues 1129–1143 (QRKKRATHSAGKRKG) show a composition bias toward basic residues. A Phosphoserine; by MAPK1 modification is found at Ser1178. Positions 1179–1221 (PIQSCQDLTPVSHSQSETQLGSKSTSHSGQDTEEAGSSMSTLE) are enriched in polar residues. Phosphothreonine; by MAPK1 is present on Thr1187. Ser1267 bears the Phosphoserine; by MAPK1 mark. 2 disordered regions span residues 1288 to 1330 (SVDR…PSRT) and 1394 to 1419 (LLPV…SANV). Residues 1297-1310 (RSQSVSEGPTTQQP) show a composition bias toward polar residues. An interaction with MYO10 region spans residues 1432–1439 (LEGLMKQL).

This sequence belongs to the immunoglobulin superfamily. DCC family. As to quaternary structure, interacts with the cytoplasmic part of UNC5A, UNC5B, UNC5C and probably UNC5D. Interacts with DSCAM. Interacts with PTK2/FAK1 and MAPK1. Interacts with NTN1. Interacts with MYO10. Interacts with CBLN4; this interaction can be competed by NTN1. Interacts with SIAH1 and SIAH2. Post-translationally, ubiquitinated; mediated by SIAH1 or SIAH2 and leading to its subsequent proteasomal degradation. Found in axons of the central and peripheral nervous system and in differentiated cell types of the intestine. Not expressed in colorectal tumor cells that lost their capacity to differentiate into mucus producing cells.

It localises to the membrane. Functionally, receptor for netrin required for axon guidance. Mediates axon attraction of neuronal growth cones in the developing nervous system upon ligand binding. Its association with UNC5 proteins may trigger signaling for axon repulsion. It also acts as a dependence receptor required for apoptosis induction when not associated with netrin ligand. Implicated as a tumor suppressor gene. The polypeptide is Netrin receptor DCC (DCC) (Homo sapiens (Human)).